The chain runs to 435 residues: Asparagine--tRNA ligase (435 aa).

The protein belongs to the class-II aminoacyl-tRNA synthetase family. As to quaternary structure, homodimer.

Its subcellular location is the cytoplasm. It catalyses the reaction tRNA(Asn) + L-asparagine + ATP = L-asparaginyl-tRNA(Asn) + AMP + diphosphate + H(+). The chain is Asparagine--tRNA ligase from Leptospira interrogans serogroup Icterohaemorrhagiae serovar Lai (strain 56601).